The primary structure comprises 121 residues: Large ribosomal subunit protein uL22 (121 aa).

The protein belongs to the universal ribosomal protein uL22 family. As to quaternary structure, part of the 50S ribosomal subunit.

This protein binds specifically to 23S rRNA; its binding is stimulated by other ribosomal proteins, e.g. L4, L17, and L20. It is important during the early stages of 50S assembly. It makes multiple contacts with different domains of the 23S rRNA in the assembled 50S subunit and ribosome. In terms of biological role, the globular domain of the protein is located near the polypeptide exit tunnel on the outside of the subunit, while an extended beta-hairpin is found that lines the wall of the exit tunnel in the center of the 70S ribosome. The sequence is that of Large ribosomal subunit protein uL22 from Micrococcus luteus (strain ATCC 4698 / DSM 20030 / JCM 1464 / CCM 169 / CCUG 5858 / IAM 1056 / NBRC 3333 / NCIMB 9278 / NCTC 2665 / VKM Ac-2230) (Micrococcus lysodeikticus).